A 116-amino-acid chain; its full sequence is uncharacterized protein (116 aa).

An HTH cro/C1-type domain is found at 6-60 (LKKCRKQKKLTQQNMADKLGITRPAYTAYELGSREPDYKTLINISNILDVSLDYL). The H-T-H motif DNA-binding region spans 17–36 (QQNMADKLGITRPAYTAYEL).

This is an uncharacterized protein from Bacillus subtilis (strain 168).